Reading from the N-terminus, the 203-residue chain is Small ribosomal subunit protein uS4 (203 aa).

Positions 93-173 constitute an S4 RNA-binding domain; it reads RRLDNVVFRS…FPSWIQVDKA (81 aa).

The protein belongs to the universal ribosomal protein uS4 family. In terms of assembly, part of the 30S ribosomal subunit. Contacts protein S5. The interaction surface between S4 and S5 is involved in control of translational fidelity.

In terms of biological role, one of the primary rRNA binding proteins, it binds directly to 16S rRNA where it nucleates assembly of the body of the 30S subunit. With S5 and S12 plays an important role in translational accuracy. This chain is Small ribosomal subunit protein uS4, found in Chlorobium limicola (strain DSM 245 / NBRC 103803 / 6330).